The chain runs to 179 residues: Large ribosomal subunit protein uL5 (179 aa).

It belongs to the universal ribosomal protein uL5 family. Part of the 50S ribosomal subunit; part of the 5S rRNA/L5/L18/L25 subcomplex. Contacts the 5S rRNA and the P site tRNA. Forms a bridge to the 30S subunit in the 70S ribosome.

Functionally, this is one of the proteins that bind and probably mediate the attachment of the 5S RNA into the large ribosomal subunit, where it forms part of the central protuberance. In the 70S ribosome it contacts protein S13 of the 30S subunit (bridge B1b), connecting the 2 subunits; this bridge is implicated in subunit movement. Contacts the P site tRNA; the 5S rRNA and some of its associated proteins might help stabilize positioning of ribosome-bound tRNAs. The protein is Large ribosomal subunit protein uL5 of Francisella tularensis subsp. tularensis (strain SCHU S4 / Schu 4).